Reading from the N-terminus, the 1146-residue chain is ATP-dependent helicase/deoxyribonuclease subunit B (1146 aa).

The UvrD-like helicase ATP-binding domain occupies 1-280; it reads MSLRFIYGRA…LNSKPLFRFS (280 aa). 8-15 lines the ATP pocket; sequence GRAGSGKT. The 309-residue stretch at 276–584 folds into the UvrD-like helicase C-terminal domain; the sequence is LFRFSQSPEL…LVGSLERSRS (309 aa). [4Fe-4S] cluster is bound by residues Cys786, Cys1105, Cys1108, and Cys1114.

Belongs to the helicase family. AddB/RexB type 1 subfamily. Heterodimer of AddA and AddB. Requires Mg(2+) as cofactor. [4Fe-4S] cluster serves as cofactor.

Its function is as follows. The heterodimer acts as both an ATP-dependent DNA helicase and an ATP-dependent, dual-direction single-stranded exonuclease. Recognizes the chi site generating a DNA molecule suitable for the initiation of homologous recombination. The AddB subunit has 5' -&gt; 3' nuclease activity but not helicase activity. The sequence is that of ATP-dependent helicase/deoxyribonuclease subunit B from Acetivibrio thermocellus (strain ATCC 27405 / DSM 1237 / JCM 9322 / NBRC 103400 / NCIMB 10682 / NRRL B-4536 / VPI 7372) (Clostridium thermocellum).